Here is a 292-residue protein sequence, read N- to C-terminus: Elongation factor Ts (292 aa).

An involved in Mg(2+) ion dislocation from EF-Tu region spans residues 79-82; sequence TDFV.

This sequence belongs to the EF-Ts family.

Its subcellular location is the cytoplasm. Functionally, associates with the EF-Tu.GDP complex and induces the exchange of GDP to GTP. It remains bound to the aminoacyl-tRNA.EF-Tu.GTP complex up to the GTP hydrolysis stage on the ribosome. The chain is Elongation factor Ts from Xanthomonas euvesicatoria pv. vesicatoria (strain 85-10) (Xanthomonas campestris pv. vesicatoria).